The primary structure comprises 421 residues: D-amino acid dehydrogenase (421 aa).

4-18 (VLVLGSGVVGLTSAW) contributes to the FAD binding site.

This sequence belongs to the DadA oxidoreductase family. It depends on FAD as a cofactor.

The enzyme catalyses a D-alpha-amino acid + A + H2O = a 2-oxocarboxylate + AH2 + NH4(+). It functions in the pathway amino-acid degradation; D-alanine degradation; NH(3) and pyruvate from D-alanine: step 1/1. Functionally, oxidative deamination of D-amino acids. The polypeptide is D-amino acid dehydrogenase (Vibrio cholerae serotype O1 (strain ATCC 39541 / Classical Ogawa 395 / O395)).